We begin with the raw amino-acid sequence, 336 residues long: Atypical chemokine receptor 1 (336 aa).

The Extracellular segment spans residues 1-63 (MGNCLHQAEL…CSLLNDSSLP (63 aa)). N-linked (GlcNAc...) asparagine glycans are attached at residues asparagine 16, asparagine 27, asparagine 33, and asparagine 58. Disulfide bonds link cysteine 51-cysteine 276 and cysteine 129-cysteine 195. Residues 64-84 (FFILASDLGILASSTVLFMLF) form a helical membrane-spanning segment. At 85-95 (RPLFRWQLCPG) the chain is on the cytoplasmic side. Residues 96 to 116 (WPVLAQLAVGSALFSIVVPIL) form a helical membrane-spanning segment. At 117–129 (APGLGNTHSSALC) the chain is on the extracellular side. A helical transmembrane segment spans residues 130 to 153 (SLGYCVWYGSAFAQALLLGCHASL). Residues 154 to 166 (GPKLGAGQVPGLT) lie on the Cytoplasmic side of the membrane. A helical transmembrane segment spans residues 167–187 (LGLPVGLWGATALLTLPITLA). The Extracellular segment spans residues 188 to 207 (SGASDGLCTPIYSTELEALQ). Residues 208–228 (ATHAVACFAIFVLLPLGLFGA) form a helical membrane-spanning segment. The Cytoplasmic segment spans residues 229-244 (KGLKKALGMGPGPWMN). A helical membrane pass occupies residues 245-265 (ILWVWFIFWWPHGLVLGLDFL). Residues 266 to 287 (VGSKLSLLPTCLAQQVLDLLLN) are Extracellular-facing. A helical membrane pass occupies residues 288-308 (LAEALAIVHCVATPLLLALFC). The Cytoplasmic segment spans residues 309 to 336 (HQTTRTLLPSLPLPERWSSPVDTLGSKS).

It belongs to the G-protein coupled receptor 1 family. Atypical chemokine receptor subfamily.

It localises to the early endosome. The protein localises to the recycling endosome. It is found in the membrane. Atypical chemokine receptor that controls chemokine levels and localization via high-affinity chemokine binding that is uncoupled from classic ligand-driven signal transduction cascades, resulting instead in chemokine sequestration, degradation, or transcytosis. Also known as interceptor (internalizing receptor) or chemokine-scavenging receptor or chemokine decoy receptor. Has a promiscuous chemokine-binding profile, interacting with inflammatory chemokines of both the CXC and the CC subfamilies but not with homeostatic chemokines. Acts as a receptor for chemokines including CCL2, CCL5, CCL7, CCL11, CCL13, CCL14, CCL17, CXCL5, CXCL6, IL8/CXCL8, CXCL11, GRO, RANTES, MCP-1 and TARC. May regulate chemokine bioavailability and, consequently, leukocyte recruitment through two distinct mechanisms: when expressed in endothelial cells, it sustains the abluminal to luminal transcytosis of tissue-derived chemokines and their subsequent presentation to circulating leukocytes; when expressed in erythrocytes, serves as blood reservoir of cognate chemokines but also as a chemokine sink, buffering potential surges in plasma chemokine levels. This Saimiri boliviensis boliviensis (Bolivian squirrel monkey) protein is Atypical chemokine receptor 1 (ACKR1).